The chain runs to 361 residues: Zygote arrest protein 1 (361 aa).

2 disordered regions span residues 68–129 (GPRP…PRSW) and 142–252 (GLSS…EQDK). A compositionally biased stretch (low complexity) spans 116–128 (PRSPARAGRPPRS). Phosphothreonine is present on threonine 155. The segment covering 238 to 252 (ASRDRASPQSTEQDK) has biased composition (basic and acidic residues). The segment at 263–346 (KYGYYHCKDC…RQDLCGRCKD (84 aa)) adopts a 3CxxC-type zinc-finger fold.

It belongs to the ZAR1 family. Interacts with YBX2. Phosphorylation by CDK1 does not regulate formation of MARDO (mitochondria-associated ribonucleoprotein domain) membraneless compartment. Post-translationally, ubiquitinated and degradaded by the proteasome during oocyte meiotic maturation, leading to MARDO (mitochondria-associated ribonucleoprotein domain) membraneless compartment dissolution.

It localises to the cytoplasm. The protein resides in the cytoplasmic ribonucleoprotein granule. Its function is as follows. mRNA-binding protein that mediates formation of MARDO (mitochondria-associated ribonucleoprotein domain), a membraneless compartment that stores maternal mRNAs in oocytes. MARDO assembly around mitochondria is directed by an increase in mitochondrial membrane potential during oocyte growth. Promotes formation of MARDO phase-separated membraneless compartment by undergoing liquid-liquid phase separation upon binding to maternal mRNAs. Binds to the 3'-UTR of maternal mRNAs. Maternal mRNAs stored in the MARDO are translationally repressed. Essential for female fertility and oocyte-to-embryo transition by coordinating maternal mRNA storage, translation and degradation. The sequence is that of Zygote arrest protein 1 from Rattus norvegicus (Rat).